A 261-amino-acid polypeptide reads, in one-letter code: 3-hydroxyacyl-CoA dehydrogenase type-2 (261 aa).

N-acetylalanine is present on alanine 2. Residues serine 20 and aspartate 41 each coordinate NAD(+). N6-acetyllysine; alternate is present on lysine 53. Residue lysine 53 is modified to N6-succinyllysine; alternate. NAD(+) is bound at residue valine 65. At lysine 69 the chain carries N6-acetyllysine. NAD(+) is bound at residue cysteine 91. An N6-acetyllysine mark is found at lysine 99 and lysine 105. At lysine 107 the chain carries N6-acetyllysine; alternate. Lysine 107 is modified (N6-succinyllysine; alternate). A substrate-binding site is contributed by serine 155. Residues tyrosine 168, lysine 172, phenylalanine 201, and threonine 203 each contribute to the NAD(+) site. Tyrosine 168 (proton acceptor) is an active-site residue. Lysine 212 bears the N6-acetyllysine; alternate mark. Position 212 is an N6-succinyllysine; alternate (lysine 212).

Belongs to the short-chain dehydrogenases/reductases (SDR) family. As to quaternary structure, homotetramer. Component of mitochondrial ribonuclease P, a complex composed of TRMT10C/MRPP1, HSD17B10/MRPP2 and PRORP/MRPP3. Interacts with TRMT10C/MRPP1; forming the MRPP1-MRPP2 subcomplex of the mitochondrial ribonuclease P complex.

Its subcellular location is the mitochondrion. It is found in the mitochondrion matrix. The protein localises to the mitochondrion nucleoid. It catalyses the reaction a (3S)-3-hydroxyacyl-CoA + NAD(+) = a 3-oxoacyl-CoA + NADH + H(+). The enzyme catalyses (2S,3S)-3-hydroxy-2-methylbutanoyl-CoA + NAD(+) = 2-methyl-3-oxobutanoyl-CoA + NADH + H(+). The catalysed reaction is testosterone + NAD(+) = androst-4-ene-3,17-dione + NADH + H(+). It carries out the reaction 5alpha-androstane-3alpha,17beta-diol + NAD(+) = 17beta-hydroxy-5alpha-androstan-3-one + NADH + H(+). It catalyses the reaction 17beta-estradiol + NAD(+) = estrone + NADH + H(+). The enzyme catalyses cholate + NAD(+) = 3alpha,12alpha-dihydroxy-7-oxo-5beta-cholanate + NADH + H(+). The catalysed reaction is (3S)-3-hydroxybutanoyl-CoA + NAD(+) = acetoacetyl-CoA + NADH + H(+). It carries out the reaction (3S)-hydroxyoctanoyl-CoA + NAD(+) = 3-oxooctanoyl-CoA + NADH + H(+). It catalyses the reaction (3S)-hydroxyhexadecanoyl-CoA + NAD(+) = 3-oxohexadecanoyl-CoA + NADH + H(+). The enzyme catalyses 17beta-hydroxy-5alpha-androstan-3-one + NAD(+) = 5alpha-androstan-3,17-dione + NADH + H(+). The catalysed reaction is 5alpha-pregnan-20beta-ol-3-one + NAD(+) = 5alpha-pregnane-3,20-dione + NADH + H(+). It carries out the reaction 3alpha-hydroxy-5alpha-pregnan-20-one + NAD(+) = 5alpha-pregnane-3,20-dione + NADH + H(+). It catalyses the reaction cortisone + NAD(+) = 17alpha-hydroxypregn-4-en-3,11,20-trione-21-al + NADH + H(+). The enzyme catalyses 11-dehydrocorticosterone + NAD(+) = pregn-4-ene-3,11,20,21-tetraone + NADH + H(+). The catalysed reaction is cortisol + NAD(+) = 11beta,17alpha-dihydroxypregn-4-ene-3,20,21-trione + NADH + H(+). It carries out the reaction chenodeoxycholate + NAD(+) = 7-oxolithocholate + NADH + H(+). It catalyses the reaction ursodeoxycholate + NAD(+) = 7-oxolithocholate + NADH + H(+). The enzyme catalyses 3beta,7beta-dihydroxy-5beta-cholan-24-oate + NAD(+) = 3beta-hydroxy-7-oxo-5beta-cholan-24-oate + NADH + H(+). It functions in the pathway amino-acid degradation; L-isoleucine degradation. Its pathway is lipid metabolism; fatty acid beta-oxidation. It participates in steroid metabolism. The protein operates within lipid metabolism; bile acid biosynthesis. In terms of biological role, mitochondrial dehydrogenase involved in pathways of fatty acid, branched-chain amino acid and steroid metabolism. Acts as (S)-3-hydroxyacyl-CoA dehydrogenase in mitochondrial fatty acid beta-oxidation, a major degradation pathway of fatty acids. Catalyzes the third step in the beta-oxidation cycle, namely the reversible conversion of (S)-3-hydroxyacyl-CoA to 3-ketoacyl-CoA. Preferentially accepts straight medium- and short-chain acyl-CoA substrates with highest efficiency for (3S)-hydroxybutanoyl-CoA. Acts as 3-hydroxy-2-methylbutyryl-CoA dehydrogenase in branched-chain amino acid catabolic pathway. Catalyzes the oxidation of 3-hydroxy-2-methylbutanoyl-CoA into 2-methyl-3-oxobutanoyl-CoA, a step in isoleucine degradation pathway. Has hydroxysteroid dehydrogenase activity toward steroid hormones and bile acids. Catalyzes the oxidation of 3alpha-, 17beta-, 20beta- and 21-hydroxysteroids and 7alpha- and 7beta-hydroxy bile acids. Oxidizes allopregnanolone/brexanolone at the 3alpha-hydroxyl group, which is known to be critical for the activation of gamma-aminobutyric acid receptors (GABAARs) chloride channel. Has phospholipase C-like activity toward cardiolipin and its oxidized species. Likely oxidizes the 2'-hydroxyl in the head group of cardiolipin to form a ketone intermediate that undergoes nucleophilic attack by water and fragments into diacylglycerol, dihydroxyacetone and orthophosphate. Has higher affinity for cardiolipin with oxidized fatty acids and may degrade these species during the oxidative stress response to protect cells from apoptosis. By interacting with intracellular amyloid-beta, it may contribute to the neuronal dysfunction associated with Alzheimer disease (AD). Essential for structural and functional integrity of mitochondria. In addition to mitochondrial dehydrogenase activity, moonlights as a component of mitochondrial ribonuclease P, a complex that cleaves tRNA molecules in their 5'-ends. Together with TRMT10C/MRPP1, forms a subcomplex of the mitochondrial ribonuclease P, named MRPP1-MRPP2 subcomplex, which displays functions that are independent of the ribonuclease P activity. The MRPP1-MRPP2 subcomplex catalyzes the formation of N(1)-methylguanine and N(1)-methyladenine at position 9 (m1G9 and m1A9, respectively) in tRNAs; HSD17B10/MRPP2 acting as a non-catalytic subunit. The MRPP1-MRPP2 subcomplex also acts as a tRNA maturation platform: following 5'-end cleavage by the mitochondrial ribonuclease P complex, the MRPP1-MRPP2 subcomplex enhances the efficiency of 3'-processing catalyzed by ELAC2, retains the tRNA product after ELAC2 processing and presents the nascent tRNA to the mitochondrial CCA tRNA nucleotidyltransferase TRNT1 enzyme. Associates with mitochondrial DNA complexes at the nucleoids to initiate RNA processing and ribosome assembly. This is 3-hydroxyacyl-CoA dehydrogenase type-2 (Hsd17b10) from Mus musculus (Mouse).